The chain runs to 233 residues: Large ribosomal subunit protein uL1 (233 aa).

The protein belongs to the universal ribosomal protein uL1 family. Part of the 50S ribosomal subunit.

In terms of biological role, binds directly to 23S rRNA. The L1 stalk is quite mobile in the ribosome, and is involved in E site tRNA release. Protein L1 is also a translational repressor protein, it controls the translation of the L11 operon by binding to its mRNA. In Shewanella denitrificans (strain OS217 / ATCC BAA-1090 / DSM 15013), this protein is Large ribosomal subunit protein uL1.